Reading from the N-terminus, the 508-residue chain is Aldehyde dehydrogenase family 7 member A1 (508 aa).

244 to 249 (GSSKVG) contacts NAD(+). The active-site Proton acceptor is Glu-266. The active-site Nucleophile is Cys-300.

Belongs to the aldehyde dehydrogenase family. In terms of assembly, homotetramer.

The catalysed reaction is an aldehyde + NAD(+) + H2O = a carboxylate + NADH + 2 H(+). The polypeptide is Aldehyde dehydrogenase family 7 member A1 (Pisum sativum (Garden pea)).